Here is a 279-residue protein sequence, read N- to C-terminus: Tryptophan 2,3-dioxygenase (279 aa).

Residues 48–52 (FIIQH), tyrosine 110, and arginine 114 contribute to the substrate site. Histidine 237 is a heme binding site. A substrate-binding site is contributed by threonine 251.

The protein belongs to the tryptophan 2,3-dioxygenase family. Homotetramer. It depends on heme as a cofactor.

It carries out the reaction L-tryptophan + O2 = N-formyl-L-kynurenine. It participates in amino-acid degradation; L-tryptophan degradation via kynurenine pathway; L-kynurenine from L-tryptophan: step 1/2. In terms of biological role, heme-dependent dioxygenase that catalyzes the oxidative cleavage of the L-tryptophan (L-Trp) pyrrole ring and converts L-tryptophan to N-formyl-L-kynurenine. Catalyzes the oxidative cleavage of the indole moiety. This Bradyrhizobium sp. (strain ORS 278) protein is Tryptophan 2,3-dioxygenase.